The chain runs to 376 residues: Ribonucleoside-diphosphate reductase 1 subunit beta (376 aa).

Residues Asp-85, Glu-116, and His-119 each contribute to the Fe cation site. Tyr-123 is an active-site residue. Fe cation is bound by residues Glu-205, Glu-239, and His-242.

The protein belongs to the ribonucleoside diphosphate reductase small chain family. In terms of assembly, tetramer of two alpha (R1) and two beta (R2) subunits. The B1 protein is a dimer of alpha subunits. A radical transfer pathway occurs between Tyr-123 of R2 and R1. Requires Fe cation as cofactor.

The enzyme catalyses a 2'-deoxyribonucleoside 5'-diphosphate + [thioredoxin]-disulfide + H2O = a ribonucleoside 5'-diphosphate + [thioredoxin]-dithiol. Functionally, provides the precursors necessary for DNA synthesis. Catalyzes the biosynthesis of deoxyribonucleotides from the corresponding ribonucleotides. R2 contains the tyrosyl radical required for catalysis. This is Ribonucleoside-diphosphate reductase 1 subunit beta (nrdB) from Salmonella typhimurium (strain LT2 / SGSC1412 / ATCC 700720).